A 242-amino-acid polypeptide reads, in one-letter code: Uridylate kinase (242 aa).

17–20 (KLSG) lines the ATP pocket. G59 contacts UMP. 2 residues coordinate ATP: G60 and R64. Residues D79 and 140–147 (LGNPFFTT) each bind UMP. T167, Y173, and D176 together coordinate ATP.

Belongs to the UMP kinase family. In terms of assembly, homohexamer.

It localises to the cytoplasm. It carries out the reaction UMP + ATP = UDP + ADP. It functions in the pathway pyrimidine metabolism; CTP biosynthesis via de novo pathway; UDP from UMP (UMPK route): step 1/1. Its activity is regulated as follows. Inhibited by UTP. In terms of biological role, catalyzes the reversible phosphorylation of UMP to UDP. The polypeptide is Uridylate kinase (Buchnera aphidicola subsp. Baizongia pistaciae (strain Bp)).